We begin with the raw amino-acid sequence, 241 residues long: ATP phosphoribosyltransferase (241 aa).

This sequence belongs to the ATP phosphoribosyltransferase family. Short subfamily. As to quaternary structure, heteromultimer composed of HisG and HisZ subunits.

It localises to the cytoplasm. The catalysed reaction is 1-(5-phospho-beta-D-ribosyl)-ATP + diphosphate = 5-phospho-alpha-D-ribose 1-diphosphate + ATP. It participates in amino-acid biosynthesis; L-histidine biosynthesis; L-histidine from 5-phospho-alpha-D-ribose 1-diphosphate: step 1/9. In terms of biological role, catalyzes the condensation of ATP and 5-phosphoribose 1-diphosphate to form N'-(5'-phosphoribosyl)-ATP (PR-ATP). Has a crucial role in the pathway because the rate of histidine biosynthesis seems to be controlled primarily by regulation of HisG enzymatic activity. The sequence is that of ATP phosphoribosyltransferase from Gluconobacter oxydans (strain 621H) (Gluconobacter suboxydans).